We begin with the raw amino-acid sequence, 364 residues long: Chaperone protein DnaJ (364 aa).

Residues Asp4–Gly69 enclose the J domain. Residues Gly135–Gln213 form a CR-type zinc finger. The Zn(2+) site is built by Cys148, Cys151, Cys165, Cys168, Cys187, Cys190, Cys201, and Cys204. CXXCXGXG motif repeat units lie at residues Cys148–Lys155, Cys165–Gly172, Cys187–Gly194, and Cys201–Gly208.

It belongs to the DnaJ family. Homodimer. Requires Zn(2+) as cofactor.

Its subcellular location is the cytoplasm. Functionally, participates actively in the response to hyperosmotic and heat shock by preventing the aggregation of stress-denatured proteins and by disaggregating proteins, also in an autonomous, DnaK-independent fashion. Unfolded proteins bind initially to DnaJ; upon interaction with the DnaJ-bound protein, DnaK hydrolyzes its bound ATP, resulting in the formation of a stable complex. GrpE releases ADP from DnaK; ATP binding to DnaK triggers the release of the substrate protein, thus completing the reaction cycle. Several rounds of ATP-dependent interactions between DnaJ, DnaK and GrpE are required for fully efficient folding. Also involved, together with DnaK and GrpE, in the DNA replication of plasmids through activation of initiation proteins. The protein is Chaperone protein DnaJ of Borreliella burgdorferi (strain ATCC 35210 / DSM 4680 / CIP 102532 / B31) (Borrelia burgdorferi).